A 454-amino-acid chain; its full sequence is Asparagine--tRNA ligase (454 aa).

The protein belongs to the class-II aminoacyl-tRNA synthetase family. In terms of assembly, homodimer.

It localises to the cytoplasm. It catalyses the reaction tRNA(Asn) + L-asparagine + ATP = L-asparaginyl-tRNA(Asn) + AMP + diphosphate + H(+). This Ureaplasma parvum serovar 3 (strain ATCC 27815 / 27 / NCTC 11736) protein is Asparagine--tRNA ligase.